The sequence spans 88 residues: Cytochrome c oxidase subunit 6B2 (88 aa).

Residues T29–W75 form the CHCH domain. The Cx9C motif motif lies at C32–C42. 2 cysteine pairs are disulfide-bonded: C32–C67 and C42–C56. Positions C56–C67 match the Cx10C motif motif.

The protein belongs to the cytochrome c oxidase subunit 6B family. As to quaternary structure, component of the cytochrome c oxidase (complex IV, CIV), a multisubunit enzyme composed of 14 subunits. The complex is composed of a catalytic core of 3 subunits MT-CO1, MT-CO2 and MT-CO3, encoded in the mitochondrial DNA, and 11 supernumerary subunits COX4I1 (or COX4I2), COX5A, COX5B, COX6A2 (or COX6A1), COX6B1 (or COX6B2), COX6C, COX7A1 (or COX7A2), COX7B, COX7C, COX8B and NDUFA4, which are encoded in the nuclear genome. The complex exists as a monomer or a dimer and forms supercomplexes (SCs) in the inner mitochondrial membrane with NADH-ubiquinone oxidoreductase (complex I, CI) and ubiquinol-cytochrome c oxidoreductase (cytochrome b-c1 complex, complex III, CIII), resulting in different assemblies (supercomplex SCI(1)III(2)IV(1) and megacomplex MCI(2)III(2)IV(2)). Testis specific.

The protein localises to the mitochondrion inner membrane. It functions in the pathway energy metabolism; oxidative phosphorylation. Functionally, component of the cytochrome c oxidase, the last enzyme in the mitochondrial electron transport chain which drives oxidative phosphorylation. The respiratory chain contains 3 multisubunit complexes succinate dehydrogenase (complex II, CII), ubiquinol-cytochrome c oxidoreductase (cytochrome b-c1 complex, complex III, CIII) and cytochrome c oxidase (complex IV, CIV), that cooperate to transfer electrons derived from NADH and succinate to molecular oxygen, creating an electrochemical gradient over the inner membrane that drives transmembrane transport and the ATP synthase. Cytochrome c oxidase is the component of the respiratory chain that catalyzes the reduction of oxygen to water. Electrons originating from reduced cytochrome c in the intermembrane space (IMS) are transferred via the dinuclear copper A center (CU(A)) of subunit 2 and heme A of subunit 1 to the active site in subunit 1, a binuclear center (BNC) formed by heme A3 and copper B (CU(B)). The BNC reduces molecular oxygen to 2 water molecules using 4 electrons from cytochrome c in the IMS and 4 protons from the mitochondrial matrix. The polypeptide is Cytochrome c oxidase subunit 6B2 (COX6B2) (Bos taurus (Bovine)).